The sequence spans 292 residues: Secreted frizzled-related protein 2 (292 aa).

A signal peptide spans 1-20 (MPRRLCALLLLASQCLGSTA). The FZ domain maps to 32–152 (YKRSNCKPIP…PKDNDLCIPL (121 aa)). 7 cysteine pairs are disulfide-bonded: Cys37–Cys100, Cys47–Cys93, Cys84–Cys122, Cys111–Cys149, Cys115–Cys139, Cys169–Cys242, and Cys187–Cys292. The NTR domain occupies 169-292 (CDACKNKNED…FSRSIRKLQC (124 aa)).

It belongs to the secreted frizzled-related protein (sFRP) family.

The protein resides in the secreted. In terms of biological role, soluble frizzled-related proteins (sFRPS) function as modulators of Wnt signaling through direct interaction with Wnts. They have a role in regulating cell growth and differentiation in specific cell types. SFRP2 appears to be associated with myogenesis. This is Secreted frizzled-related protein 2 (SFRP2) from Gallus gallus (Chicken).